The chain runs to 245 residues: Adapter protein MecA (245 aa).

This sequence belongs to the MecA family. As to quaternary structure, homodimer.

Enables the recognition and targeting of unfolded and aggregated proteins to the ClpC protease or to other proteins involved in proteolysis. The protein is Adapter protein MecA of Streptococcus pneumoniae serotype 19F (strain G54).